A 624-amino-acid polypeptide reads, in one-letter code: DNA mismatch repair protein MutL (624 aa).

Residues Leu416–Lys436 form a disordered region.

It belongs to the DNA mismatch repair MutL/HexB family.

Functionally, this protein is involved in the repair of mismatches in DNA. It is required for dam-dependent methyl-directed DNA mismatch repair. May act as a 'molecular matchmaker', a protein that promotes the formation of a stable complex between two or more DNA-binding proteins in an ATP-dependent manner without itself being part of a final effector complex. The protein is DNA mismatch repair protein MutL of Chlorobaculum tepidum (strain ATCC 49652 / DSM 12025 / NBRC 103806 / TLS) (Chlorobium tepidum).